Consider the following 473-residue polypeptide: Biotin-dependent acetyl-/propionyl-coenzyme A carboxylase beta6 subunit (473 aa).

Residues 1–224 form the CoA carboxyltransferase N-terminal domain; the sequence is MTIMAPEAVG…QGHFDRSKAE (224 aa). The region spanning 225–473 is the CoA carboxyltransferase C-terminal domain; sequence AGDTDIHALL…RRGRHKNIPL (249 aa).

Belongs to the AccD/PCCB family. The biotin-dependent acyl-CoA carboxylase complex is composed of AccA3, which contains the biotin carboxylase (BC) and biotin carboxyl carrier protein (BCCP) domains, and AccD6, which contains the carboxyl transferase (CT) domain.

The enzyme catalyses N(6)-carboxybiotinyl-L-lysyl-[protein] + acetyl-CoA = N(6)-biotinyl-L-lysyl-[protein] + malonyl-CoA. It catalyses the reaction N(6)-carboxybiotinyl-L-lysyl-[protein] + propanoyl-CoA = methylmalonyl-CoA + N(6)-biotinyl-L-lysyl-[protein]. Its pathway is lipid metabolism; fatty acid biosynthesis. It functions in the pathway lipid metabolism; mycolic acid biosynthesis. Component of a biotin-dependent acyl-CoA carboxylase complex. This subunit transfers the CO2 from carboxybiotin to the CoA ester substrate. When associated with the alpha3 subunit AccA3, is involved in the carboxylation of acetyl-CoA and propionyl-CoA. The chain is Biotin-dependent acetyl-/propionyl-coenzyme A carboxylase beta6 subunit (accD6) from Mycobacterium bovis (strain ATCC BAA-935 / AF2122/97).